The following is a 2766-amino-acid chain: Thyroglobulin (2766 aa).

An N-terminal signal peptide occupies residues Met1–Ala20. The residue at position 25 (Tyr25) is an Iodotyrosine; alternate. Tyr25 bears the Sulfotyrosine; alternate mark. A Thyroxine; alternate modification is found at Tyr25. Tyr25 carries the post-translational modification Triiodothyronine; alternate. Thyroglobulin type-1 domains follow at residues Leu32–Cys93, Leu94–Cys161, Pro162–Cys298, and Pro299–Cys359. 8 cysteine pairs are disulfide-bonded: Cys35–Cys53, Cys64–Cys71, Cys73–Cys93, Cys97–Cys121, Cys132–Cys139, Cys141–Cys161, Cys165–Cys184, and Cys195–Cys236. Iodotyrosine is present on Tyr109. Residue Asn111 is glycosylated (N-linked (GlcNAc...) asparagine). Tyr150 bears the Iodotyrosine; alternate mark. A Diiodotyrosine; alternate modification is found at Tyr150. Asn199 is a glycosylation site (N-linked (GlcNAc...) asparagine). An iodotyrosine mark is found at Tyr235 and Tyr259. 9 cysteine pairs are disulfide-bonded: Cys302-Cys320, Cys331-Cys337, Cys339-Cys359, Cys365-Cys620, Cys408-Cys608, Cys631-Cys636, Cys638-Cys658, Cys662-Cys687, and Cys698-Cys703. N-linked (GlcNAc...) asparagine glycosylation is found at Asn484 and Asn496. 6 consecutive Thyroglobulin type-1 domains span residues Ala605–Cys658, Pro659–Cys726, Pro727–Cys922, Pro923–Cys1074, Pro1075–Cys1146, and Pro1147–Cys1211. Iodotyrosine; alternate is present on Tyr704. A Thyroxine; alternate modification is found at Tyr704. Tyr704 carries the triiodothyronine; alternate modification. The residue at position 704 (Tyr704) is a Diiodotyrosine; alternate. 16 disulfide bridges follow: Cys705/Cys726, Cys730/Cys763, Cys774/Cys899, Cys901/Cys922, Cys926/Cys1032, Cys1043/Cys1050, Cys1052/Cys1074, Cys1078/Cys1109, Cys1127/Cys1146, Cys1150/Cys1170, Cys1182/Cys1189, Cys1191/Cys1211, Cys1216/Cys1265, Cys1232/Cys1246, Cys1306/Cys1356, and Cys1331/Cys1347. A glycan (N-linked (GlcNAc...) asparagine) is linked at Asn748. Tyr785 is subject to Iodotyrosine. Asn817 carries N-linked (GlcNAc...) asparagine glycosylation. Tyr867 is subject to Iodotyrosine; alternate. A Diiodotyrosine; alternate modification is found at Tyr867. Tyr884 carries the post-translational modification Diiodotyrosine. Asn948 carries an N-linked (GlcNAc...) asparagine glycan. Residue Tyr993 is modified to Iodotyrosine; alternate. Tyr993 is subject to Diiodotyrosine; alternate. Asn1141 is a glycosylation site (N-linked (GlcNAc...) asparagine). The residue at position 1310 (Tyr1310) is an Iodotyrosine. Tyr1310 carries the post-translational modification Thyroxine. Asn1349 and Asn1365 each carry an N-linked (GlcNAc...) asparagine glycan. 9 disulfide bridges follow: Cys1441–Cys1458, Cys1461–Cys1472, Cys1475–Cys1489, Cys1492–Cys1509, Cys1513–Cys1522, Cys1542–Cys1564, Cys1602–Cys1626, Cys1606–Cys1612, and Cys1638–Cys1661. 3 Type II repeats span residues Ala1455–Gln1468, Asp1469–Gly1485, and Ser1486–Gly1502. The 55-residue stretch at Val1510–Cys1564 folds into the Thyroglobulin type-1 11 domain. The Type IIIA repeat unit spans residues Cys1602–Tyr1722. N-linked (GlcNAc...) asparagine glycosylation is found at Asn1715, Asn1729, Asn1773, and Asn1864. Disulfide bonds link Cys1723/Cys1748, Cys1727/Cys1733, Cys1732/Cys1834, and Cys1759/Cys1776. A Type IIIB repeat occupies Cys1723–Trp1889. 7 cysteine pairs are disulfide-bonded: Cys1890–Cys1916, Cys1894–Cys1901, Cys1925–Cys1936, Cys1993–Cys2021, Cys1997–Cys2003, Cys2002–Cys2073, and Cys2032–Cys2045. One copy of the Type IIIA repeat lies at Cys1890–Glu1992. Asn1935 is a glycosylation site (N-linked (GlcNAc...) asparagine). The stretch at Cys1993–Gln2125 is one Type IIIB repeat. A glycan (N-linked (GlcNAc...) asparagine) is linked at Asn2010. Asn2120 carries an N-linked (GlcNAc...) asparagine glycan. Residues Asp2126–Arg2183 form a Type IIIA repeat. Intrachain disulfides connect Cys2128/Cys2152, Cys2132/Cys2138, and Cys2161/Cys2170. Residue Tyr2182 is modified to Iodotyrosine. The segment at Gly2186–Lys2766 is cholinesterase-like (ChEL). N-linked (GlcNAc...) asparagine glycosylation is present at Asn2249. Cys2263 and Cys2280 are oxidised to a cystine. Asn2294 carries N-linked (GlcNAc...) asparagine glycosylation. An intrachain disulfide couples Cys2441 to Cys2452. Tyr2539 carries the thyroxine modification. Tyr2572 carries the iodotyrosine; alternate modification. Tyr2572 carries the post-translational modification Thyroxine; alternate. Tyr2572 bears the Triiodothyronine; alternate mark. Tyr2572 carries the diiodotyrosine; alternate modification. N-linked (GlcNAc...) asparagine glycosylation is present at Asn2581. Iodotyrosine is present on residues Tyr2586 and Tyr2616. Cysteines 2590 and 2714 form a disulfide. Position 2696 is a diiodotyrosine (Tyr2696). The disordered stretch occupies residues Gly2729 to Lys2766. Positions Glu2739 to Leu2753 are enriched in acidic residues. Tyr2764 is subject to Iodotyrosine; alternate. Tyr2764 is subject to Thyroxine; alternate. Tyr2764 bears the Triiodothyronine; alternate mark. The residue at position 2764 (Tyr2764) is a Diiodotyrosine; alternate.

Belongs to the type-B carboxylesterase/lipase family. As to quaternary structure, monomer. Homodimer (via ChEL region); occurs in the endoplasmic reticulum and is required for export to the Golgi apparatus. Homooligomer; disulfide-linked; stored in this form in the thyroid follicle lumen. Post-translationally, iodinated on tyrosine residues by TPO. There are 4 pairs of iodinated tyrosines used for coupling: acceptor Tyr-25 is coupled to donor Tyr-150 or Tyr-235, acceptor Tyr-2572 is coupled to donor Tyr-2539, acceptor Tyr-2764 in monomer 1 is coupled to donor Tyr-2764 in monomer 2 and acceptor Tyr-1310 in monomer 1 is coupled to donor Tyr-109 in monomer 2. In terms of processing, sulfated tyrosines are desulfated during iodination. Undergoes sequential proteolysis by cathepsins to release thyroxine (T4) and triiodothyronine (T3) hormones. In the thyroid follicle lumen, cross-linked TG (storage form) is solubilized by limited proteolysis mediated by cathepsins CTSB and/or CTSL. Partially cleaved TG is further processed by CTSK/cathepsin K and/or CTSL resulting in the release of T4. Following endocytosis, further processing occurs leading to the release of T3 and more T4 hormones. Specifically expressed in the thyroid gland.

Its subcellular location is the secreted. Functionally, acts as a substrate for the production of iodinated thyroid hormones thyroxine (T4) and triiodothyronine (T3). The synthesis of T3 and T4 involves iodination of selected tyrosine residues of TG/thyroglobulin followed by their oxidative coupling. Following TG re-internalization and lysosomal-mediated proteolysis, T3 and T4 are released from the polypeptide backbone leading to their secretion into the bloodstream. One dimer produces 7 thyroid hormone molecules. The sequence is that of Thyroglobulin (Tg) from Mus musculus (Mouse).